Consider the following 858-residue polypeptide: Piwi-like protein 1 (858 aa).

Residues 1–13 (MTGRARARSRGRG) show a composition bias toward basic residues. The interval 1 to 56 (MTGRARARSRGRGRGQEPAAPGAQPPVSQEAAKPVVSTPSEGQLVGRGRQKPAPGA) is disordered. Low complexity predominate over residues 16–26 (QEPAAPGAQPP). The 113-residue stretch at 276–388 (TVLDFMYSLR…LVPEFCYLTG (113 aa)) folds into the PAZ domain. The segment at 314-316 (TYR) is required for binding 2'-O-methylated 3'-end of piRNAs. An MID region region spans residues 476–612 (SKEMRGLPLI…LQMNCKMGGE (137 aa)). In terms of domain architecture, Piwi spans 552 to 844 (MVVVILPTNR…LAFLVGQSIH (293 aa)). Active-site residues include Asp-629, Glu-667, Asp-699, and His-833.

This sequence belongs to the argonaute family. Piwi subfamily. It depends on Mg(2+) as a cofactor. In terms of processing, methylated on arginine residues; required for the interaction with Tudor domain-containing protein and subsequent localization to the meiotic nuage, also named P granule. Expressed exclusively in the adult gonads; expression in the ovary weaker than in the testis (at protein level). During neurogenesis and organogenesis, expression is detected in CNS (midbrain and eye) and fin buds. Starting from 24 hours post-fertilization, expression is found in the genital ridge.

It localises to the cytoplasm. Its function is as follows. Plays a central role during gametogenesis by repressing transposable elements and preventing their mobilization, which is essential for the germline integrity. Acts via the piRNA metabolic process, which mediates the repression of transposable elements during meiosis by forming complexes composed of piRNAs and Piwi proteins and governs the methylation and subsequent repression of transposons. Directly binds methylated piRNAs, a class of 24 to 30 nucleotide RNAs that are generated by a Dicer-independent mechanism and are primarily derived from transposons and other repeated sequence elements. Has a strong preference for piRNAs with a uridine nucleotide at their 5'-end (g1U preference, also named 1U-bias) and binds piRNAs in an opposite direction compared to piwil2/zili. Participates in a piRNA amplification loop with piwil2/zili. Not involved in the piRNA amplification loop, also named ping-pong amplification cycle. Acts as an endoribonuclease that cleaves transposon messenger RNAs. In Danio rerio (Zebrafish), this protein is Piwi-like protein 1 (piwil1).